A 188-amino-acid chain; its full sequence is MTLDNLTHHFLIAAPSMPDERFAQSLVYICRHDRHGVLGLVVNRPIFDTQVGHLLDNLDIEVTDTSVMYDTPLDGGPVYPEVGFVLHTGQPTWASSFPISENVCITTSKDILQNIAAGSAGIGHYHLCLGHASWHEGQLEKEISQGDWLVSPGDLSLLFEIPFEERWRHAAEKIGVHLDFLSDEVGRA.

This sequence belongs to the UPF0301 (AlgH) family.

This is UPF0301 protein PsycPRwf_0144 from Psychrobacter sp. (strain PRwf-1).